The chain runs to 225 residues: Methylthioribulose-1-phosphate dehydratase (225 aa).

The Zn(2+) site is built by histidine 106 and histidine 108.

This sequence belongs to the aldolase class II family. MtnB subfamily. Zn(2+) serves as cofactor.

The enzyme catalyses 5-(methylsulfanyl)-D-ribulose 1-phosphate = 5-methylsulfanyl-2,3-dioxopentyl phosphate + H2O. Its pathway is amino-acid biosynthesis; L-methionine biosynthesis via salvage pathway; L-methionine from S-methyl-5-thio-alpha-D-ribose 1-phosphate: step 2/6. In terms of biological role, catalyzes the dehydration of methylthioribulose-1-phosphate (MTRu-1-P) into 2,3-diketo-5-methylthiopentyl-1-phosphate (DK-MTP-1-P). This Xanthomonas oryzae pv. oryzae (strain KACC10331 / KXO85) protein is Methylthioribulose-1-phosphate dehydratase.